The chain runs to 182 residues: uncharacterized protein (182 aa).

The region spanning 55–182 (VNLHDLEKLC…GVKGMFWYPL (128 aa)) is the N-acetyltransferase domain.

Belongs to the acetyltransferase family. Ycf52 subfamily.

The protein localises to the plastid. The protein resides in the chloroplast. This is an uncharacterized protein from Gracilaria tenuistipitata var. liui (Red alga).